Here is a 365-residue protein sequence, read N- to C-terminus: tRNA-specific 2-thiouridylase MnmA (365 aa).

ATP is bound by residues 6 to 13 and Met32; that span reads GMSGGVDS. Residues 92–94 are interaction with target base in tRNA; that stretch reads NPD. Residue Cys97 is the Nucleophile of the active site. Cysteines 97 and 197 form a disulfide. Position 121 (Gly121) interacts with ATP. An interaction with tRNA region spans residues 147–149; that stretch reads KDQ. Residue Cys197 is the Cysteine persulfide intermediate of the active site. An interaction with tRNA region spans residues 315–316; sequence RY.

The protein belongs to the MnmA/TRMU family.

Its subcellular location is the cytoplasm. It carries out the reaction S-sulfanyl-L-cysteinyl-[protein] + uridine(34) in tRNA + AH2 + ATP = 2-thiouridine(34) in tRNA + L-cysteinyl-[protein] + A + AMP + diphosphate + H(+). Catalyzes the 2-thiolation of uridine at the wobble position (U34) of tRNA, leading to the formation of s(2)U34. This is tRNA-specific 2-thiouridylase MnmA from Azoarcus sp. (strain BH72).